Reading from the N-terminus, the 367-residue chain is 3-dehydroquinate synthase (367 aa).

NAD(+) contacts are provided by residues 99 to 103, 123 to 124, Lys-136, Lys-145, and 163 to 166; these read GVVGD, TT, and FLRT. Residues Glu-178, His-242, and His-259 each coordinate Zn(2+).

This sequence belongs to the sugar phosphate cyclases superfamily. Dehydroquinate synthase family. Co(2+) serves as cofactor. Zn(2+) is required as a cofactor. Requires NAD(+) as cofactor.

Its subcellular location is the cytoplasm. The catalysed reaction is 7-phospho-2-dehydro-3-deoxy-D-arabino-heptonate = 3-dehydroquinate + phosphate. It functions in the pathway metabolic intermediate biosynthesis; chorismate biosynthesis; chorismate from D-erythrose 4-phosphate and phosphoenolpyruvate: step 2/7. Its function is as follows. Catalyzes the conversion of 3-deoxy-D-arabino-heptulosonate 7-phosphate (DAHP) to dehydroquinate (DHQ). This chain is 3-dehydroquinate synthase, found in Chlorobaculum parvum (strain DSM 263 / NCIMB 8327) (Chlorobium vibrioforme subsp. thiosulfatophilum).